The chain runs to 822 residues: Putative endoplasmic reticulum metallopeptidase 1 (822 aa).

Residues 1–14 (MVLVCASSSKCKRN) are Cytoplasmic-facing. Residues 15-35 (TFLQLAMVLFAVVMARIALYF) form a helical membrane-spanning segment. The Lumenal segment spans residues 36–365 (HNHLDEPLVD…FNSLFFMYSK (330 aa)). Asn-146 carries N-linked (GlcNAc...) asparagine glycosylation. Residues His-161 and Asp-173 each contribute to the Zn(2+) site. Glu-207 serves as the catalytic Proton acceptor. Residues Glu-208 and Glu-234 each contribute to the Zn(2+) site. An N-linked (GlcNAc...) asparagine glycan is attached at Asn-291. His-307 contacts Zn(2+). Residues 366–384 (LTSKILNTLVGGLGILLTL) form a helical membrane-spanning segment. At 385 to 392 (RGSEGSFT) the chain is on the cytoplasmic side. Residues 393–413 (VALIAQVISIAGIFVIPNIWA) form a helical membrane-spanning segment. The Lumenal portion of the chain corresponds to 414-431 (YILGNVLDCGMSWFRNEY). The helical transmembrane segment at 432-452 (WPLFIYLPAIFASLFFTESLF) threads the bilayer. At 453 to 463 (KRSEHLALRAT) the chain is on the cytoplasmic side. A helical transmembrane segment spans residues 464-484 (IFIFSLLTFIPLPSAYLFTII). Residue Asp-485 is a topological domain, lumenal. The chain crosses the membrane as a helical span at residues 486–506 (FFMVFALFLNDKILAKPGTVH). The Cytoplasmic segment spans residues 507 to 514 (PLTYFIGS). Residues 515-535 (IGAMTVGFESAINLLEIFVPL) traverse the membrane as a helical segment. Over 536-547 (TGRIGTDKVADN) the chain is Lumenal. A helical membrane pass occupies residues 548–568 (VVATVCVCGFNIYFPLMSPWI). At 569–575 (QRFRSRC) the chain is on the cytoplasmic side. The helical transmembrane segment at 576 to 596 (CFRLGLLFSIFVVGFSSFILA) threads the bilayer. Over 597–822 (KQDTYYDSLH…GVVSGNFKLE (226 aa)) the chain is Lumenal. 4 N-linked (GlcNAc...) asparagine glycosylation sites follow: Asn-617, Asn-682, Asn-706, and Asn-758.

It belongs to the peptidase M28 family. M28B subfamily. Requires Zn(2+) as cofactor.

The protein resides in the endoplasmic reticulum membrane. The protein is Putative endoplasmic reticulum metallopeptidase 1 of Schizosaccharomyces pombe (strain 972 / ATCC 24843) (Fission yeast).